The primary structure comprises 670 residues: Probable potassium transport system protein Kup (670 aa).

The disordered stretch occupies residues 1–42 (MSQIPSPNDPPPAGAVPTSGAPAGPSATPAPSPTAGFSLPEH). Residues 15-35 (AVPTSGAPAGPSATPAPSPTA) show a composition bias toward low complexity. Helical transmembrane passes span 51 to 71 (LAALAVGALGVVYGDIGTSPL), 91 to 111 (VLGVLSLVFWAMTFVVTFKYM), 144 to 164 (VLLMLGLFGAALLYGDGIITP), 180 to 200 (PAMERVVVPATVVILVFLFLF), 208 to 228 (VGAVFGPIMLVWFATIAVLGV), 254 to 274 (GWHGFLVLGGVVLVITGGEAL), 290 to 310 (WLGLAMPALLLNYLGQGALLL), 322 to 342 (LLAPEWALYPTIAIATAAAIV), 380 to 400 (IYLPEVNWMLGTACVALVLGF), 406 to 426 (LASAYGIAVTGTMIVTTLLFH), 440 to 460 (AWPLTVLFLTVDASFFLANVV), and 464 to 484 (DGGWFPIAAAALVFTLMSTWK).

This sequence belongs to the HAK/KUP transporter (TC 2.A.72) family.

The protein resides in the cell inner membrane. The enzyme catalyses K(+)(in) + H(+)(in) = K(+)(out) + H(+)(out). Its function is as follows. Transport of potassium into the cell. Likely operates as a K(+):H(+) symporter. In Anaeromyxobacter dehalogenans (strain 2CP-C), this protein is Probable potassium transport system protein Kup.